The chain runs to 412 residues: Serine hydroxymethyltransferase (412 aa).

Residues leucine 125 and 129-131 contribute to the (6S)-5,6,7,8-tetrahydrofolate site; that span reads GHL. Lysine 234 carries the N6-(pyridoxal phosphate)lysine modification. Residue glutamate 250 participates in (6S)-5,6,7,8-tetrahydrofolate binding.

The protein belongs to the SHMT family. Homodimer. Requires pyridoxal 5'-phosphate as cofactor.

The protein localises to the cytoplasm. The enzyme catalyses (6R)-5,10-methylene-5,6,7,8-tetrahydrofolate + glycine + H2O = (6S)-5,6,7,8-tetrahydrofolate + L-serine. It functions in the pathway one-carbon metabolism; tetrahydrofolate interconversion. Its pathway is amino-acid biosynthesis; glycine biosynthesis; glycine from L-serine: step 1/1. Functionally, catalyzes the reversible interconversion of serine and glycine with tetrahydrofolate (THF) serving as the one-carbon carrier. This reaction serves as the major source of one-carbon groups required for the biosynthesis of purines, thymidylate, methionine, and other important biomolecules. Also exhibits THF-independent aldolase activity toward beta-hydroxyamino acids, producing glycine and aldehydes, via a retro-aldol mechanism. This Deinococcus geothermalis (strain DSM 11300 / CIP 105573 / AG-3a) protein is Serine hydroxymethyltransferase.